A 301-amino-acid chain; its full sequence is Mating type protein mtA-1 (301 aa).

Positions 49 to 104 (APKKKVNGFMGFRSYYSSLFSQFPQKARSPFMTILWQHDPFHNEWDFMCSVYSSIR) form a DNA-binding region, alpha box.

Belongs to the MATALPHA1 family.

It localises to the nucleus. Functionally, mating type proteins are sequence specific DNA-binding proteins that act as master switches in fungal differentiation by controlling gene expression in a cell type-specific fashion. Transcriptional activator that induces the transcription of alpha-specific genes. The polypeptide is Mating type protein mtA-1 (MTA1) (Sordaria fimicola).